Here is a 1272-residue protein sequence, read N- to C-terminus: Myosin-3 (1272 aa).

A disordered region spans residues 1 to 20; that stretch reads MAVIKKGARRKDVKEPKKRS. Residues 36–715 form the Myosin motor domain; sequence VGISDLTLLS…SLFALEDMRD (680 aa). 129–136 provides a ligand contact to ATP; sequence GESGAGKT. S357 bears the Phosphoserine mark. Residues 588–610 are actin-binding; that stretch reads ANELVETLSKAEPSYIRTIKPNQ. IQ domains lie at 719–739 and 740–765; these read YNMA…RIDA and AIKI…YGTK. The TH1 domain maps to 771–961; the sequence is KERRSMSLLG…TIYVRRGHPA (191 aa). 3 disordered regions span residues 951-1015, 1029-1141, and 1217-1272; these read STIY…QKPV, YNPK…SELP, and VQFG…DDDW. The segment covering 980–1000 has biased composition (basic residues); that stretch reads IKSKKSKHKSTHKHTHSHRSH. A compositionally biased stretch (low complexity) spans 1066–1078; that stretch reads KKASSSHKSSSAK. Positions 1089–1098 are enriched in basic and acidic residues; sequence GVEKNKEPLK. A compositionally biased stretch (pro residues) spans 1109-1118; the sequence is PIPPPPPPMG. Residues 1120–1182 enclose the SH3 domain; it reads PKDPKFEAAY…PTAYMTPYKD (63 aa). Over residues 1217–1236 the composition is skewed to polar residues; the sequence is VQFGSATVGPTSDNQSNPVG. A compositionally biased stretch (acidic residues) spans 1258-1272; it reads ADDDDNDDGDDDDDW.

It belongs to the TRAFAC class myosin-kinesin ATPase superfamily. Myosin family. Interacts (via myosin motor domain) with SHE4; this interaction is important for proper localization and may regulate the interaction of the motor domain with actin. Interacts (via SH3 domain) with VRP1; this interaction is required for localization to sites of polarized growth and may regulate the interaction of the tail domain with actin. Interacts (via SH3 domain) with PAN1; this interaction is important for late stages of endocytopsis. Interacts (via SH3 domain) with BBC1 and LAS17. Interacts (via C-terminal acidic tail) with ARC19 and ARC40; ARC19 and ARC40 are Arp2/3 complex subunits. Post-translationally, phosphorylation of the TEDS site (Ser-357) is required for the polarization of the actin cytoskeleton and for ligand-induced, but not for constitutive internalization of STE2. Phosphorylation probably activates the myosin-I ATPase. Ser-357 is phosphorylated by CLA4 and STE20 in vitro.

It is found in the cytoplasm. The protein localises to the cytoskeleton. It localises to the actin patch. In terms of biological role, one of two redundant type-I myosins implicated in the organization of the actin cytoskeleton. Required for proper actin cytoskeleton polarization and for the internalization step in endocytosis. At the cell cortex, assembles in patch-like structures together with proteins from the actin-polymerizing machinery and promotes actin assembly. Functions redundantly with LAS17 as actin nucleation-promoting factor (NPF) for the Arp2/3 complex. Motor domain phosphorylation by PAK kinases CLA4 and STE20 promotes CDC42-regulated actin assembly. Functions together with the NPF PAN1 in late stages of endocytosis. Motor domain phosphorylation by PDK1 kinases PKH1 and PKH2, and by SGK kinases YPK1 and YPK2, promotes ligand-induced, but not constitutive endocytosis of the G protein-coupled receptor STE2. This Saccharomyces cerevisiae (strain ATCC 204508 / S288c) (Baker's yeast) protein is Myosin-3 (MYO3).